Consider the following 117-residue polypeptide: UPF0344 protein GWCH70_0687 (117 aa).

Transmembrane regions (helical) follow at residues 2 to 22, 32 to 52, 55 to 75, and 97 to 117; these read THAH…AVSL, IVQM…GLLL, IASI…LIGA, and IVAF…FDLF.

It belongs to the UPF0344 family.

It localises to the cell membrane. The sequence is that of UPF0344 protein GWCH70_0687 from Geobacillus sp. (strain WCH70).